We begin with the raw amino-acid sequence, 392 residues long: Antitrypsin (392 aa).

The signal sequence occupies residues 1–16 (MKTIICLFTIAIAAMA).

The protein belongs to the serpin family. Hemolymph.

The protein localises to the secreted. Functionally, may play a role in the prophenoloxidase activating system in the silkworm hemolymph. The polypeptide is Antitrypsin (Bombyx mori (Silk moth)).